The sequence spans 229 residues: Non-structural protein P8 (229 aa).

The span at 13 to 31 shows a compositional bias: basic and acidic residues; the sequence is KMKHNQDRVEEPSQVRVDD. A disordered region spans residues 13-46; the sequence is KMKHNQDRVEEPSQVRVDDTISQPPRYAPSAPMP. The segment covering 36–46 has biased composition (low complexity); sequence PPRYAPSAPMP. The next 2 membrane-spanning stretches (helical) occupy residues 119-139 and 162-182; these read IIHT…VCTL and SLNP…MVCA.

This sequence belongs to the orbivirus NS3 family. In terms of assembly, forms homooligomers via coiled-coil motif. Interacts with host OPTN; this interaction inhibits innate immune response.

The protein resides in the host cell membrane. It is found in the host Golgi apparatus. Its function is as follows. Plays a role in the inhibition of host innate immune response. Interacts with host OPTN and thus inhibits the recruitment of TBK1 to the host Golgi apparatus. In turn, downstream partner IRF3 cannot be activated and IFN-beta production is impaired. Facilitates viral particle release either by increasing plasma membrane permeability through a viroporin-like activity or by viral budding. The polypeptide is Non-structural protein P8 (Segment-10) (Antilocapra americana (Pronghorn)).